The sequence spans 763 residues: uncharacterized protein (763 aa).

The TR mART core domain maps to 380–607 (DSVLNPFNTN…YNIKVITMRL (228 aa)). A helical membrane pass occupies residues 684–700 (SYVSIYALLCPLLTNIY).

The protein localises to the membrane. This is an uncharacterized protein from Acanthamoeba polyphaga mimivirus (APMV).